Reading from the N-terminus, the 103-residue chain is Pterin-4-alpha-carbinolamine dehydratase 2 (103 aa).

It belongs to the pterin-4-alpha-carbinolamine dehydratase family. Highest level found in the kidney, liver, heart and ovarian follicles.

The catalysed reaction is (4aS,6R)-4a-hydroxy-L-erythro-5,6,7,8-tetrahydrobiopterin = (6R)-L-erythro-6,7-dihydrobiopterin + H2O. Functionally, involved in tetrahydrobiopterin biosynthesis. Seems to both prevent the formation of 7-pterins and accelerate the formation of quinonoid-BH2. In terms of biological role, regulates the dimerization of homeodomain protein HNF-1-alpha and enhances its transcriptional activity. This Gallus gallus (Chicken) protein is Pterin-4-alpha-carbinolamine dehydratase 2 (PCBD2).